A 927-amino-acid chain; its full sequence is Nonsense-mediated mRNA decay factor SMG8 (927 aa).

Disordered regions lie at residues 543 to 581 (NTGK…NTAS), 611 to 636 (QARS…DTEN), and 643 to 662 (QEPA…AVST). Positions 551 to 566 (QDEDAGEDEAEEEEGQ) are enriched in acidic residues. Residues 613–633 (RSEQLSNSEQNTTRSGSSSVD) are compositionally biased toward polar residues. The span at 644 to 654 (EPAKKEAREDV) shows a compositional bias: basic and acidic residues.

Belongs to the SMG8 family.

In terms of biological role, involved in nonsense-mediated decay (NMD) of mRNAs containing premature stop codons. Probable component of kinase complex containing nonC and recruited to stalled ribosomes. This chain is Nonsense-mediated mRNA decay factor SMG8, found in Drosophila sechellia (Fruit fly).